Consider the following 257-residue polypeptide: MSTVQAIRTVLFYLLLSASAFVWGTLSFFIAPILPFRARYRFVVQNWCRFAIWLTRVVAGIRYEVRGLENIPEKPCVILSKHQSTWETFFLSGFFEPLSQVLKRELLYVPFFGWALALLKPIAIDRSQPKLALKQLAKQGDECLKKGAWVLIFPEGTRIPVGQMGKFSRGGTALAVNAGLPVLPIAHNAGQYWPKAGWAKYPGTIQVVIGPAMHAEGEGPRAIAELNQRAEAWVSETMAEISPIQQRVSHPEPSVVS.

A helical membrane pass occupies residues 10–30; the sequence is VLFYLLLSASAFVWGTLSFFI. The HXXXXD motif motif lies at 82 to 87; that stretch reads HQSTWE. Residues 105 to 125 traverse the membrane as a helical segment; sequence ELLYVPFFGWALALLKPIAID.

Belongs to the 1-acyl-sn-glycerol-3-phosphate acyltransferase family.

It is found in the cell inner membrane. The catalysed reaction is a 1-acyl-sn-glycero-3-phosphate + an acyl-CoA = a 1,2-diacyl-sn-glycero-3-phosphate + CoA. Its pathway is phospholipid metabolism; CDP-diacylglycerol biosynthesis; CDP-diacylglycerol from sn-glycerol 3-phosphate: step 2/3. Functionally, converts lysophosphatidic acid (LPA) into phosphatidic acid by incorporating acyl moiety at the 2 position. This Pseudomonas aeruginosa (strain ATCC 15692 / DSM 22644 / CIP 104116 / JCM 14847 / LMG 12228 / 1C / PRS 101 / PAO1) protein is 1-acyl-sn-glycerol-3-phosphate acyltransferase.